A 292-amino-acid chain; its full sequence is 33 kDa chaperonin (292 aa).

2 disulfide bridges follow: Cys-238-Cys-240 and Cys-271-Cys-274.

It belongs to the HSP33 family. Post-translationally, under oxidizing conditions two disulfide bonds are formed involving the reactive cysteines. Under reducing conditions zinc is bound to the reactive cysteines and the protein is inactive.

The protein resides in the cytoplasm. Functionally, redox regulated molecular chaperone. Protects both thermally unfolding and oxidatively damaged proteins from irreversible aggregation. Plays an important role in the bacterial defense system toward oxidative stress. This Latilactobacillus sakei subsp. sakei (strain 23K) (Lactobacillus sakei subsp. sakei) protein is 33 kDa chaperonin.